The sequence spans 195 residues: Protein LIGHT-DEPENDENT SHORT HYPOCOTYLS 4 (195 aa).

The span at Thr-28–Ser-38 shows a compositional bias: low complexity. Disordered stretches follow at residues Thr-28 to Asn-51 and Ser-162 to Asn-195. The ALOG domain maps to Arg-48–Lys-175. Positions Lys-173 to Lys-177 match the Nuclear localization signal motif.

It belongs to the plant homeotic and developmental regulators ALOG protein family. In terms of tissue distribution, induced by NAC054/CUC1 and NAC098/CUC2 in shoot organ boundary cells.

Its subcellular location is the nucleus. Functionally, probable transcription regulator that acts as a developmental regulator by promoting cell growth in response to light. May suppress organ differentiation in the boundary region. In Arabidopsis thaliana (Mouse-ear cress), this protein is Protein LIGHT-DEPENDENT SHORT HYPOCOTYLS 4 (LSH4).